The sequence spans 475 residues: Lipoprotein lipase (475 aa).

The N-terminal stretch at 1–27 (MESKALLLVALGMWFQSLTATRGGVAA) is a signal peptide. The interval 32 to 53 (GDFIDIESKFALRTPEDTAEDT) is interaction with GPIHBP1. A disulfide bond links C54 and C67. N-linked (GlcNAc...) asparagine glycosylation occurs at N70. Y121 carries the post-translational modification 3'-nitrotyrosine. S159 serves as the catalytic Nucleophile. D183 (charge relay system) is an active-site residue. Y191 is modified (3'-nitrotyrosine). Residues A194, R197, S199, and D202 each contribute to the Ca(2+) site. A disulfide bridge connects residues C243 and C266. H268 acts as the Charge relay system in catalysis. Intrachain disulfides connect C291–C310 and C302–C305. In terms of domain architecture, PLAT spans 341 to 464 (FHYQVKIHFS…KGKASVVFVK (124 aa)). The residue at position 343 (Y343) is a 3'-nitrotyrosine. The N-linked (GlcNAc...) asparagine glycan is linked to N386. Residues 417–421 (WSDWW) form an important for interaction with lipoprotein particles region. The tract at residues 430 to 434 (KIRVK) is important for heparin binding. The tract at residues 443 to 467 (IFCSREKVSHLQKGKASVVFVKCHD) is interaction with GPIHBP1. An intrachain disulfide couples C445 to C465.

Belongs to the AB hydrolase superfamily. Lipase family. As to quaternary structure, homodimer. Interacts with GPIHBP1 with 1:1 stoichiometry. Interacts with APOC2; the interaction activates LPL activity in the presence of lipids. Interaction with heparan sulfate proteoglycans is required to protect LPL against loss of activity. Associates with lipoprotein particles in blood plasma. Interacts with LMF1 and SEL1L; interaction with SEL1L is required to prevent aggregation of newly synthesized LPL in the endoplasmic reticulum (ER), and for normal export of LPL from the ER to the extracellular space. Interacts with SORL1; SORL1 acts as a sorting receptor, promoting LPL localization to endosomes and later to lysosomes, leading to degradation of newly synthesized LPL. Post-translationally, tyrosine nitration after lipopolysaccharide (LPS) challenge down-regulates the lipase activity.

It is found in the cell membrane. The protein localises to the secreted. It localises to the extracellular space. The protein resides in the extracellular matrix. The enzyme catalyses a triacylglycerol + H2O = a diacylglycerol + a fatty acid + H(+). With respect to regulation, the apolipoprotein APOC2 acts as a coactivator of LPL activity. Ca(2+) binding promotes protein stability and formation of the active homodimer. Interaction with GPIHBP1 protects LPL against inactivation by ANGPTL4. Functionally, key enzyme in triglyceride metabolism. Catalyzes the hydrolysis of triglycerides from circulating chylomicrons and very low density lipoproteins (VLDL), and thereby plays an important role in lipid clearance from the blood stream, lipid utilization and storage. Mediates margination of triglyceride-rich lipoprotein particles in capillaries. Recruited to its site of action on the luminal surface of vascular endothelium by binding to GPIHBP1 and cell surface heparan sulfate proteoglycans. The protein is Lipoprotein lipase (LPL) of Neovison vison (American mink).